A 663-amino-acid chain; its full sequence is MKDLFKIYSNYQPAGDQPTAIASLIDGLESGLAKQTLLGVTGSGKTFTIAHVIQAMKRPTLIMAPNKTLAAQLYGEFKAFFPDNAVEYFVSYYDYYQPEAYVPASDTFIEKDASINEHIEQMRLSATKALIERKDAIIVATVSAIYGLGDPDSYLRMLLHLSRGEQSDQRKILKRLAEMQYTRTNLSLERGQFRVHGDVIDIFPADSEKEAIRIELFDDEVDNIARFDPLTGEILQRLPRVTIFPKTHYVTPRERILETVEKVKAELQERLAELNAQNKLVEAQRLEQRTCFDIEMMLELGYCSGIENYSRYLSNREAGEAPPTLFDYLPPDALLIIDESHVTVPQIGGMYRGDRARKETLVNYGFRLPSALDNRPLRFEEFEERSPQTIYISATPGPYEQEHSDNVAEQVVRPTGLIDPEVEIRPVKTQVDDLMSEIRQVIAQGSRILVTTLTKRMAEDLTEYLSEHGIKVRYLHSDVDTVERMEIIRDLRLGEFDVLVGINLLREGLDMPEVALVAILDADKEGFLRSERSLIQTIGRAARNVKGRAILYADTMTGSMQRALMETERRREKQKAFNLKHGITPKGINKSVEDILEGAYIGKRKTMVAEQAPRYTHWSPQELAKQINALEKQMYAHAQNMEFELAAKIRDEYLLLKEQLMKI.

A Helicase ATP-binding domain is found at 26–183 (DGLESGLAKQ…KRLAEMQYTR (158 aa)). 39-46 (GVTGSGKT) serves as a coordination point for ATP. The short motif at 92–115 (YYDYYQPEAYVPASDTFIEKDASI) is the Beta-hairpin element. A Helicase C-terminal domain is found at 430–596 (QVDDLMSEIR…GINKSVEDIL (167 aa)). The region spanning 624–659 (AKQINALEKQMYAHAQNMEFELAAKIRDEYLLLKEQ) is the UVR domain.

It belongs to the UvrB family. Forms a heterotetramer with UvrA during the search for lesions. Interacts with UvrC in an incision complex.

The protein resides in the cytoplasm. Functionally, the UvrABC repair system catalyzes the recognition and processing of DNA lesions. A damage recognition complex composed of 2 UvrA and 2 UvrB subunits scans DNA for abnormalities. Upon binding of the UvrA(2)B(2) complex to a putative damaged site, the DNA wraps around one UvrB monomer. DNA wrap is dependent on ATP binding by UvrB and probably causes local melting of the DNA helix, facilitating insertion of UvrB beta-hairpin between the DNA strands. Then UvrB probes one DNA strand for the presence of a lesion. If a lesion is found the UvrA subunits dissociate and the UvrB-DNA preincision complex is formed. This complex is subsequently bound by UvrC and the second UvrB is released. If no lesion is found, the DNA wraps around the other UvrB subunit that will check the other stand for damage. In Legionella pneumophila (strain Corby), this protein is UvrABC system protein B.